Consider the following 138-residue polypeptide: Large ribosomal subunit protein uL16 (138 aa).

The span at 1–17 (MLIPRKVKHRKQHHPRQ) shows a compositional bias: basic residues. The disordered stretch occupies residues 1–22 (MLIPRKVKHRKQHHPRQRGIAS).

Belongs to the universal ribosomal protein uL16 family. In terms of assembly, part of the 50S ribosomal subunit.

In terms of biological role, binds 23S rRNA and is also seen to make contacts with the A and possibly P site tRNAs. This Mycobacterium tuberculosis (strain ATCC 25177 / H37Ra) protein is Large ribosomal subunit protein uL16.